The chain runs to 689 residues: Chloride channel protein ClC-Kb (689 aa).

Residues 1-51 (MSRVLVIEQREGEEKTLIQKHIFRPFPNTRRVVIDHLQRLKNFLFRIGDDW) lie on the Cytoplasmic side of the membrane. The next 2 membrane-spanning stretches (helical) occupy residues 52 to 83 (YFLFALGVIMALISFTMDFTVSKMLNAHRWLQ) and 92 to 112 (LRYLSWIVYPIALVAFSTGFA). The segment at residues 117 to 128 (PHSGGSGIPELK) is an intramembrane region (helical). Serine 122 is a chloride binding site. 2 helical membrane passes run 142-161 (IKNFGAKVVGLTCTLSAGST) and 162-181 (MFLGKVGPFVHLSSMIAAYL). N-linked (GlcNAc...) asparagine glycosylation is present at asparagine 194. Positions 204 to 225 (AAAAVGVSTVFGAPISGVLFSV) form an intramembrane region, helical. Residues 237-256 (YWRGFFAATCGAFVFRLLAV) form a helical membrane-spanning segment. Glutamate 260, glutamate 262, aspartate 279, and glutamate 282 together coordinate Ca(2+). 2 helical membrane passes run 283–311 (MFFFAILGVVCGLIGCAYLFCQRWLLGYV) and 326–343 (PMYSALVALLISSITFPE). Residues 350 to 361 (ASRLTMKELLTS) constitute an intramembrane region (helical). Transmembrane regions (helical) follow at residues 402 to 422 (GTLAFFIIMKFWMFILATTLP) and 423 to 442 (MPAGYFMPVFVFGAAIGRLV). Phenylalanine 428 is a chloride binding site. The segment at residues 466–498 (GGYAWQGAPAYSGAVTHSVSTALLAFEATGQIA) is an intramembrane region (helical). Residues 502–522 (PVILCVLIANAFTQKLQPSFY) traverse the membrane as a helical segment. Over 523-689 (DGTIIVKKLP…KAIEDLANPK (167 aa)) the chain is Cytoplasmic. CBS domains lie at 553–613 (MNPD…SHER) and 630–689 (ACSI…ANPK).

Belongs to the chloride channel (TC 2.A.49) family. N-glycosylated on a single asparagine, probably Asn-365 or Asn-375. Expressed in two distinct regions of the kidney; the proximal convoluted tubule and the diluting segment.

It is found in the cell membrane. Functionally, voltage-gated chloride channel. Chloride channels have several functions including the regulation of cell volume, the stabilization of membrane potential, signal transduction and transepithelial transport. The chain is Chloride channel protein ClC-Kb (clcnkb) from Xenopus laevis (African clawed frog).